We begin with the raw amino-acid sequence, 484 residues long: Poly(A) polymerase alpha-B (484 aa).

The Nuclear localization signal 1 signature appears at R240 to K257. Disordered regions lie at residues S276–L314, V326–P356, and K375–R484. A Nuclear localization signal 2 motif is present at residues K392 to K407. A compositionally biased stretch (basic and acidic residues) spans E423–S441. Low complexity predominate over residues S451 to S464.

This sequence belongs to the poly(A) polymerase family. In terms of assembly, monomer.

The protein localises to the nucleus. It carries out the reaction RNA(n) + ATP = RNA(n)-3'-adenine ribonucleotide + diphosphate. Functionally, polymerase that creates the 3'-poly(A) tail of mRNA's. May acquire specificity through interaction with a cleavage and polyadenylation factor (CPSF). The polypeptide is Poly(A) polymerase alpha-B (papola-b) (Xenopus laevis (African clawed frog)).